The chain runs to 235 residues: Large ribosomal subunit protein uL3 (235 aa).

Residues 138–157 form a disordered region; that stretch reads SVSHRSHGSTGGRQDPGKTF. Gln-151 is modified (N5-methylglutamine).

It belongs to the universal ribosomal protein uL3 family. In terms of assembly, part of the 50S ribosomal subunit. Forms a cluster with proteins L14 and L19. Methylated by PrmB.

Its function is as follows. One of the primary rRNA binding proteins, it binds directly near the 3'-end of the 23S rRNA, where it nucleates assembly of the 50S subunit. The protein is Large ribosomal subunit protein uL3 of Rhodospirillum centenum (strain ATCC 51521 / SW).